A 278-amino-acid polypeptide reads, in one-letter code: MDVRQSVHSEHAKTLDTTELRKKFLIEQIFTPNQYTMTYSHIDRIVVGGIMPVDGEITFDDGIGKQFGVNYFLERRELGLINIGGPAKIVIDGTSYEVGNEEALYVGKGAKALAFSSLDSAKPAKLYYNSAPAHAVFPTRIITQDDAIKAPLGDVKTCNKRTICKYLVPEVVETCQLSMGLTRLAEGSNWNSMPTHTHERRMEVYFYFDMAEDTIIFHMMGEPHETRHLVMHNEQAVISPSWSIHTGVGTKNYAFIWGMIGENLTFDDMDHIAMLDLR.

Zn(2+)-binding residues include His-196, His-198, Glu-203, and His-245.

This sequence belongs to the KduI family. Requires Zn(2+) as cofactor.

The enzyme catalyses 5-dehydro-4-deoxy-D-glucuronate = 3-deoxy-D-glycero-2,5-hexodiulosonate. It functions in the pathway glycan metabolism; pectin degradation; 2-dehydro-3-deoxy-D-gluconate from pectin: step 4/5. Catalyzes the isomerization of 5-dehydro-4-deoxy-D-glucuronate to 3-deoxy-D-glycero-2,5-hexodiulosonate. The chain is 4-deoxy-L-threo-5-hexosulose-uronate ketol-isomerase from Pectobacterium carotovorum subsp. carotovorum (Erwinia carotovora subsp. carotovora).